Here is a 501-residue protein sequence, read N- to C-terminus: MTDPTNAPALDENQIIAERRAKLAAIREAGVAFPNDFERRDYAGRLAHEHGDKSKEALEAEAVDVQLAGRMMLKRVMGKASFATLQDMSGRIQVYVSNDLTGLDAHEAFKRWDLGDFVGVSGTLFKTNKGELTIQAKSVRLLSKALRPLPEKFHGLADQEQKYRQRYLDLITNDDARSTFVRRSKIIQAIREFMTGHGFLEVETPMMHPIPGGAAAKPFVTHHNALDMELFLRIAPELYLKRLVVGGFEKVFEINRNFRNEGLSTRHNPEFTMMEFYEAYREYRYLMDFTEALIRHTAVAATGSTTISYQGSTIELGTPFDRLTIVEAVRKYHPEYTVEQLNDRDWLTAQFTAMKAKYREHDGLGGLQLTFFEETTEALLVQPTFIVDYPAEVSPLARRSDTQPEITERFELFITGREMANGFSELNDAEDQAERFMEQVRAKEAGDEEAMHYDADFIRALEHGLPPTGGCGIGIDRLVMLLTDSPSIRDVILFPQMRREA.

Glu411 and Glu418 together coordinate Mg(2+).

The protein belongs to the class-II aminoacyl-tRNA synthetase family. As to quaternary structure, homodimer. It depends on Mg(2+) as a cofactor.

It is found in the cytoplasm. The catalysed reaction is tRNA(Lys) + L-lysine + ATP = L-lysyl-tRNA(Lys) + AMP + diphosphate. The chain is Lysine--tRNA ligase from Thiobacillus denitrificans (strain ATCC 25259 / T1).